A 373-amino-acid chain; its full sequence is Meiosis-specific kinetochore protein (373 aa).

Disordered regions lie at residues 1–91 (MWPL…QDEK) and 250–276 (STPEKTKKKKTNSSTPGKKNRGLLTST). Residues 77–91 (SLQENRSSEDTQDEK) show a composition bias toward basic and acidic residues. The short motif at 275-277 (STP) is the POLO box domain (PBD)-binding element. A required for localization to kinetochores region spans residues 332–335 (EICC).

Interacts with CENPC. Interacts with PLK1; required for recruitment of PLK1 at kinetochores.

It is found in the chromosome. It localises to the centromere. Its subcellular location is the kinetochore. Its function is as follows. Key regulator of kinetochore function during meiosis I: required both for mono-orientation of kinetochores on sister chromosomes and protection of centromeric cohesin from separase-mediated cleavage. Acts by facilitating kinetochore mono-orientation during meiosis I, when kinetochores on sister chromosomes face the same direction and are thus captured and pulled by spindle fibers from the same pole. Also required to prevent cleavage of cohesin at centromeres during meiosis I, possibly by acting as a regulator of the shugoshin-dependent protection pathway. Acts in collaboration with PLK1: required for PLK1 enrichment to kinetochores. Not required during meiosis II or mitosis. In Homo sapiens (Human), this protein is Meiosis-specific kinetochore protein.